The primary structure comprises 266 residues: N-formylglutamate deformylase (266 aa).

It belongs to the N-formylglutamate deformylase family. As to quaternary structure, monomer.

The enzyme catalyses N-formyl-L-glutamate + H2O = formate + L-glutamate. It participates in amino-acid degradation; L-histidine degradation into L-glutamate; L-glutamate from N-formimidoyl-L-glutamate (deiminase route): step 2/2. In terms of biological role, catalyzes the hydrolysis of N-formyl-L-glutamate to formate and L-glutamate. Shows weak activity with N-formyl-L-glutamine. In Pseudomonas aeruginosa (strain ATCC 15692 / DSM 22644 / CIP 104116 / JCM 14847 / LMG 12228 / 1C / PRS 101 / PAO1), this protein is N-formylglutamate deformylase.